Here is a 325-residue protein sequence, read N- to C-terminus: D-alanine--D-alanine ligase (325 aa).

The 199-residue stretch at K102–Q300 folds into the ATP-grasp domain. A130–T185 is a binding site for ATP. D254, E267, and N269 together coordinate Mg(2+).

It belongs to the D-alanine--D-alanine ligase family. Mg(2+) serves as cofactor. It depends on Mn(2+) as a cofactor.

The protein resides in the cytoplasm. It catalyses the reaction 2 D-alanine + ATP = D-alanyl-D-alanine + ADP + phosphate + H(+). The protein operates within cell wall biogenesis; peptidoglycan biosynthesis. Its function is as follows. Cell wall formation. This chain is D-alanine--D-alanine ligase, found in Synechococcus sp. (strain JA-2-3B'a(2-13)) (Cyanobacteria bacterium Yellowstone B-Prime).